Here is a 757-residue protein sequence, read N- to C-terminus: Endonuclease MutS2 (757 aa).

An ATP-binding site is contributed by 321–328 (GPNMGGKT). In terms of domain architecture, Smr spans 681-756 (IDIRGMTVEE…GTGVTVVEVE (76 aa)).

It belongs to the DNA mismatch repair MutS family. MutS2 subfamily. In terms of assembly, homodimer. Binds to stalled ribosomes, contacting rRNA.

Functionally, endonuclease that is involved in the suppression of homologous recombination and thus may have a key role in the control of bacterial genetic diversity. Acts as a ribosome collision sensor, splitting the ribosome into its 2 subunits. Detects stalled/collided 70S ribosomes which it binds and splits by an ATP-hydrolysis driven conformational change. Acts upstream of the ribosome quality control system (RQC), a ribosome-associated complex that mediates the extraction of incompletely synthesized nascent chains from stalled ribosomes and their subsequent degradation. Probably generates substrates for RQC. This is Endonuclease MutS2 from Thermotoga neapolitana (strain ATCC 49049 / DSM 4359 / NBRC 107923 / NS-E).